The chain runs to 359 residues: Archaemetzincin-2 (359 aa).

Residue His254 participates in Zn(2+) binding. The Proton acceptor role is filled by Glu255. Residues His258, His264, Cys265, Cys270, Cys289, and Cys292 each coordinate Zn(2+).

It belongs to the peptidase M54 family. It depends on Zn(2+) as a cofactor. Predominantly expressed in testis.

In terms of biological role, probable zinc metalloprotease. This is Archaemetzincin-2 (Amz2) from Mus musculus (Mouse).